Reading from the N-terminus, the 144-residue chain is Transmembrane protein 170A (144 aa).

At 1 to 50 the chain is on the lumenal side; the sequence is MEREGSGGSGGSAGLLQQILSLKVVPRVGNGTLCPNSTSLCSFPEMWYGV. Residues N30 and N36 are each glycosylated (N-linked (GlcNAc...) asparagine). Residues 51–71 traverse the membrane as a helical segment; it reads FLWALVSSLFFHVPAGLLALF. At 72 to 85 the chain is on the cytoplasmic side; the sequence is TLRHHKYGRFMSVS. A helical transmembrane segment spans residues 86–106; that stretch reads ILLMGIVGPITAGILTSAAIA. Topologically, residues 107–116 are lumenal; sequence GVYRAAGKEM. A helical membrane pass occupies residues 117 to 137; sequence IPFEALTLGTGQTFCVLVVSF. Residues 138–144 are Cytoplasmic-facing; that stretch reads LRILATL.

Belongs to the TMEM170 family. Interacts with RTN4.

The protein resides in the endoplasmic reticulum membrane. It is found in the nucleus envelope. In terms of biological role, acts as a regulator of endoplasmic reticulum (ER) and nuclear envelope (NE) morphogenesis. Affects the ratio between tubular ER and ER sheets by promoting sheet formation at the expense of tubules. Influences NE expansion, nuclear pore complex formation and proper localization of inner nuclear membrane proteins. The chain is Transmembrane protein 170A (TMEM170A) from Homo sapiens (Human).